The sequence spans 130 residues: Putative pre-16S rRNA nuclease (130 aa).

The protein belongs to the YqgF nuclease family.

The protein localises to the cytoplasm. In terms of biological role, could be a nuclease involved in processing of the 5'-end of pre-16S rRNA. This Buchnera aphidicola subsp. Cinara cedri (strain Cc) protein is Putative pre-16S rRNA nuclease.